Here is a 172-residue protein sequence, read N- to C-terminus: Small ribosomal subunit protein uS5 (172 aa).

In terms of domain architecture, S5 DRBM spans 7–70; the sequence is VVEHLVNVNR…QNAKKYMIEV (64 aa).

The protein belongs to the universal ribosomal protein uS5 family. As to quaternary structure, part of the 30S ribosomal subunit. Contacts proteins S4 and S8.

In terms of biological role, with S4 and S12 plays an important role in translational accuracy. Located at the back of the 30S subunit body where it stabilizes the conformation of the head with respect to the body. This Orientia tsutsugamushi (strain Boryong) (Rickettsia tsutsugamushi) protein is Small ribosomal subunit protein uS5.